Reading from the N-terminus, the 700-residue chain is MGQKIHPLGFRVGITKKHQSVWFARFHKHQYAQSVLEDRFLRKNLLKLLPQLFQKKLNNSPNMPKISHIQIVRGLIPYEIGIQIHAQNCHMIKSAFEGLEVQPNFVHNLLKNHLILEKNSVKKTSLFKNAGENIELSLTAESTNDFDSTEKKRGGLNRKGEQSLNFKNSTKKTMKSNVEKRKKLFARFHQRFLGKFIVVKNGKKITKKFDSKKQLSFKNNLLSFFKKNLQERRTFRKNKFQTSFSKSSGFSKNQKNRETISLKQKAFLNFVDSKVSKANLSKPCTKFVNFYMSQTNLSFLNALKAEMNYWNQYFENSKTEEIQKFGSFRYLPLGSQKKWNLLRFKRFEKLPLPLLLKLFKALQQKALKKLERLRKEYLVFGKFSKTKTFSYYQRVRFLQNLKKFISLRKNQNSLNFSQSTFENSAQKTTNQKFALKVASLTEKSFQKKFSKIHEEKNTIKFIDHLQALVQQHRSKNLFLYLATISESRQNLKKIQQFTKQQSDFLFGISPKTLVGLTNEEKQEILKNKVSKTFFKISQKNASQKKNFQDIFVEQLQKQRTICEKNIQLTPKISIQFYSVKAQDFQTRASAVADSIVDDLEKRKAFRGVIKKAKEDLMRTPKVKGVKIQVSGRLNGAEIARSEWVRAGRVPLQTLRANIDYCYKTAQTIYGIIGVKVWIYKGYTKTRKPTANSPSVLLDLL.

Insert regions lie at residues 88–196 and 282–587; these read NCHM…LGKF and KPCT…FQTR.

It belongs to the universal ribosomal protein uS3 family. In terms of assembly, part of the 30S ribosomal subunit.

The protein localises to the plastid. Its subcellular location is the chloroplast. The chain is Small ribosomal subunit protein uS3c (rps3) from Tetradesmus obliquus (Green alga).